The primary structure comprises 820 residues: Leucine-rich repeat and guanylate kinase domain-containing protein (820 aa).

The segment covering 72 to 83 has biased composition (basic and acidic residues); it reads EAEAEQEEKQQE. Residues 72–96 form a disordered region; the sequence is EAEAEQEEKQQEDGESEESEESEMQ. A compositionally biased stretch (acidic residues) spans 84-94; the sequence is DGESEESEESE. LRR repeat units follow at residues 129-149, 150-171, 172-193, 194-215, 216-237, 238-259, 260-280, 281-302, and 303-324; these read YLNL…CGYV, HLQK…SCMP, YLLE…KPPQ, NLKK…SAYH, TLTQ…ENCI, SLTH…GTLP, IKVL…EELK, ALQN…ENHD, and LLEV…EYIE. In terms of domain architecture, LRRCT spans 337–375; that stretch reads NPIQTKPEYWFFVIYMLLRLTELDQQKIKVEEKVFAVNK. A Guanylate kinase-like domain is found at 414–597; that stretch reads YPMLILTGPA…AYQKLSELIR (184 aa). Residue 421-428 coordinates ATP; the sequence is GPAACGKR. The disordered stretch occupies residues 800 to 820; the sequence is TIMDPGSNTKPTLPPIPHGRR. The segment covering 811–820 has biased composition (pro residues); the sequence is TLPPIPHGRR.

As to quaternary structure, interacts (via guanylate kinase-like domain) with RIMBP3 (via coiled-coil region). Interacts (via guanylate kinase-like domain) with HOOK2. Interacts (via LRRCT domain) with KLC3. Interacts with HOOK1 and HOOK3. As to expression, highly expressed in the testis. During spermatid development is initially localized to a supra-nuclear region of round spermatids, and is particularly evident at the leading edge of the developing acrosome and acroplaxome. As maturation proceeded and nuclear elongation initiated, LRGUK moves distally to ultimately reside on the microtubules of the manchette. LRGUK is also evident in the sperm basal body and the sperm tail.

Its subcellular location is the cytoplasmic vesicle. It is found in the secretory vesicle. It localises to the acrosome. The protein localises to the cytoplasm. The protein resides in the cytoskeleton. Its subcellular location is the cilium basal body. Functionally, involved in multiple aspects of sperm assembly including acrosome attachment, shaping of the sperm head and in the early aspects of axoneme development. Not essential for primary cilium biogenesis. This is Leucine-rich repeat and guanylate kinase domain-containing protein (Lrguk) from Mus musculus (Mouse).